The following is a 635-amino-acid chain: BTB/POZ domain and ankyrin repeat-containing protein NPR2 (635 aa).

A BTB domain is found at 97-191; sequence SDADVDVADG…LYTGKLRPAP (95 aa). Positions 138–152 are enriched in gly residues; sequence AAGGGGGGGGGGGER. A disordered region spans residues 138–157; sequence AAGGGGGGGGGGGERTGGRP. The C2HC NPR-type zinc finger occupies 194 to 208; that stretch reads VVSCADPMCPHDSCP. Positions 197, 202, 204, and 207 each coordinate Zn(2+). 3 ANK repeats span residues 317–347, 349–376, and 380–409; these read KRVR…TLDD, NALH…NLNL, and RGYT…AVSQ. The interval 439 to 576 is salicylic acid-binding core (SBC); that stretch reads ESNKDRLCID…FLEDDLPDSP (138 aa). Arg484 contacts salicylate.

Belongs to the plant 'ANKYRIN-BTB/POZ' family. 'NPR1-like' subfamily. Interacts with NRR. Interacts with TGAL1 and TGAL11.

It is found in the nucleus. The protein operates within protein modification; protein ubiquitination. In terms of biological role, salicylic acid (SA)-binding substrate-specific adapter of an E3 ubiquitin-protein ligase complex (CUL3-RBX1-BTB) which mediates the ubiquitination and subsequent proteasomal degradation of target proteins. May be involved in regulating basal defense responses against pathogens, and may be involved in crosstalk between SA- and JA-dependent signaling pathways. Does not seem to be involved in defense response against the bacterial blight disease caused by Xanthomonas oryzae pv. oryzae (Xoo). Over-expression of NPR2/NH2 does not confer disease resistance to Xoo. The polypeptide is BTB/POZ domain and ankyrin repeat-containing protein NPR2 (Oryza sativa subsp. japonica (Rice)).